A 123-amino-acid chain; its full sequence is Ribonuclease P protein component (123 aa).

The protein belongs to the RnpA family. Consists of a catalytic RNA component (M1 or rnpB) and a protein subunit.

The enzyme catalyses Endonucleolytic cleavage of RNA, removing 5'-extranucleotides from tRNA precursor.. In terms of biological role, RNaseP catalyzes the removal of the 5'-leader sequence from pre-tRNA to produce the mature 5'-terminus. It can also cleave other RNA substrates such as 4.5S RNA. The protein component plays an auxiliary but essential role in vivo by binding to the 5'-leader sequence and broadening the substrate specificity of the ribozyme. This Streptococcus pneumoniae (strain JJA) protein is Ribonuclease P protein component.